Here is a 357-residue protein sequence, read N- to C-terminus: N-acetyl-gamma-glutamyl-phosphate reductase (357 aa).

Residue Cys-160 is part of the active site.

The protein belongs to the NAGSA dehydrogenase family. Type 1 subfamily.

Its subcellular location is the cytoplasm. It carries out the reaction N-acetyl-L-glutamate 5-semialdehyde + phosphate + NADP(+) = N-acetyl-L-glutamyl 5-phosphate + NADPH + H(+). The protein operates within amino-acid biosynthesis; L-arginine biosynthesis; N(2)-acetyl-L-ornithine from L-glutamate: step 3/4. In terms of biological role, catalyzes the NADPH-dependent reduction of N-acetyl-5-glutamyl phosphate to yield N-acetyl-L-glutamate 5-semialdehyde. The chain is N-acetyl-gamma-glutamyl-phosphate reductase from Parasynechococcus marenigrum (strain WH8102).